The sequence spans 241 residues: Uracil-DNA glycosylase (241 aa).

Asp68 serves as the catalytic Proton acceptor.

The protein belongs to the uracil-DNA glycosylase (UDG) superfamily. UNG family.

It is found in the cytoplasm. It catalyses the reaction Hydrolyzes single-stranded DNA or mismatched double-stranded DNA and polynucleotides, releasing free uracil.. Its function is as follows. Excises uracil residues from the DNA which can arise as a result of misincorporation of dUMP residues by DNA polymerase or due to deamination of cytosine. This chain is Uracil-DNA glycosylase, found in Sinorhizobium medicae (strain WSM419) (Ensifer medicae).